The chain runs to 357 residues: UDP-N-acetylglucosamine--N-acetylmuramyl-(pentapeptide) pyrophosphoryl-undecaprenol N-acetylglucosamine transferase (357 aa).

UDP-N-acetyl-alpha-D-glucosamine contacts are provided by residues 15 to 17 (TGG), Asn124, Arg165, Ser194, and Gln288.

The protein belongs to the glycosyltransferase 28 family. MurG subfamily.

The protein localises to the cell inner membrane. It carries out the reaction di-trans,octa-cis-undecaprenyl diphospho-N-acetyl-alpha-D-muramoyl-L-alanyl-D-glutamyl-meso-2,6-diaminopimeloyl-D-alanyl-D-alanine + UDP-N-acetyl-alpha-D-glucosamine = di-trans,octa-cis-undecaprenyl diphospho-[N-acetyl-alpha-D-glucosaminyl-(1-&gt;4)]-N-acetyl-alpha-D-muramoyl-L-alanyl-D-glutamyl-meso-2,6-diaminopimeloyl-D-alanyl-D-alanine + UDP + H(+). It functions in the pathway cell wall biogenesis; peptidoglycan biosynthesis. Its function is as follows. Cell wall formation. Catalyzes the transfer of a GlcNAc subunit on undecaprenyl-pyrophosphoryl-MurNAc-pentapeptide (lipid intermediate I) to form undecaprenyl-pyrophosphoryl-MurNAc-(pentapeptide)GlcNAc (lipid intermediate II). The sequence is that of UDP-N-acetylglucosamine--N-acetylmuramyl-(pentapeptide) pyrophosphoryl-undecaprenol N-acetylglucosamine transferase from Nostoc sp. (strain PCC 7120 / SAG 25.82 / UTEX 2576).